The following is a 473-amino-acid chain: Ribulose bisphosphate carboxylase large chain (473 aa).

A propeptide spanning residues 1–2 is cleaved from the precursor; that stretch reads MS. Pro3 carries the N-acetylproline modification. N6,N6,N6-trimethyllysine is present on Lys14. Positions 123 and 173 each coordinate substrate. Residue Lys175 is the Proton acceptor of the active site. A substrate-binding site is contributed by Lys177. Lys201, Asp203, and Glu204 together coordinate Mg(2+). Lys201 carries the N6-carboxylysine modification. Residue His294 is the Proton acceptor of the active site. The substrate site is built by Arg295, His327, and Ser379.

This sequence belongs to the RuBisCO large chain family. Type I subfamily. Heterohexadecamer of 8 large chains and 8 small chains; disulfide-linked. The disulfide link is formed within the large subunit homodimers. Mg(2+) serves as cofactor. The disulfide bond which can form in the large chain dimeric partners within the hexadecamer appears to be associated with oxidative stress and protein turnover.

The protein resides in the plastid. Its subcellular location is the chloroplast. It carries out the reaction 2 (2R)-3-phosphoglycerate + 2 H(+) = D-ribulose 1,5-bisphosphate + CO2 + H2O. The catalysed reaction is D-ribulose 1,5-bisphosphate + O2 = 2-phosphoglycolate + (2R)-3-phosphoglycerate + 2 H(+). RuBisCO catalyzes two reactions: the carboxylation of D-ribulose 1,5-bisphosphate, the primary event in carbon dioxide fixation, as well as the oxidative fragmentation of the pentose substrate in the photorespiration process. Both reactions occur simultaneously and in competition at the same active site. This chain is Ribulose bisphosphate carboxylase large chain, found in Ajuga chamaepitys (Yellow bugle).